We begin with the raw amino-acid sequence, 76 residues long: Putative protein StbC (76 aa).

This Escherichia coli protein is Putative protein StbC (stbC).